The following is a 1569-amino-acid chain: Pentafunctional AROM polypeptide (1569 aa).

The 3-dehydroquinate synthase stretch occupies residues 1-382 (MAEAKKPGPE…HEPRASVVDD (382 aa)). Residues 49–51 (DTN), 84–87 (EASK), 115–117 (GGV), and Asp120 contribute to the NAD(+) site. Arg131 serves as a coordination point for 7-phospho-2-dehydro-3-deoxy-D-arabino-heptonate. NAD(+) is bound at residue 140-141 (TT). 7-phospho-2-dehydro-3-deoxy-D-arabino-heptonate is bound by residues Asp147 and Lys153. Lys162 provides a ligand contact to NAD(+). Asn163 provides a ligand contact to 7-phospho-2-dehydro-3-deoxy-D-arabino-heptonate. NAD(+) is bound by residues 180–183 (FLET) and Asn191. Glu195 contributes to the Zn(2+) binding site. Residues 195–198 (EVVK) and Lys248 each bind 7-phospho-2-dehydro-3-deoxy-D-arabino-heptonate. Catalysis depends on Glu258, which acts as the Proton acceptor; for 3-dehydroquinate synthase activity. Residues 262-266 (RNLLN) and His269 contribute to the 7-phospho-2-dehydro-3-deoxy-D-arabino-heptonate site. His269 serves as a coordination point for Zn(2+). His273 serves as the catalytic Proton acceptor; for 3-dehydroquinate synthase activity. Positions 285 and 354 each coordinate 7-phospho-2-dehydro-3-deoxy-D-arabino-heptonate. Zn(2+) is bound at residue His285. Residues 395–837 (VTPGVPSNLD…WDILSQAFKV (443 aa)) are EPSP synthase. Cys819 functions as the For EPSP synthase activity in the catalytic mechanism. The segment at 859-1053 (ERSVFIIGMR…MEKDHSFFVS (195 aa)) is shikimate kinase. Position 866 to 873 (866 to 873 (GMRGAGKT)) interacts with ATP. Residues 1054 to 1267 (LTVPDVSEAA…AAPGQMSAAE (214 aa)) are 3-dehydroquinase. His1170 functions as the Proton acceptor; for 3-dehydroquinate dehydratase activity in the catalytic mechanism. Residue Lys1198 is the Schiff-base intermediate with substrate; for 3-dehydroquinate dehydratase activity of the active site. The tract at residues 1280–1569 (PCNFYLFGKP…RDARSAVLGL (290 aa)) is shikimate dehydrogenase.

This sequence in the N-terminal section; belongs to the sugar phosphate cyclases superfamily. Dehydroquinate synthase family. It in the 2nd section; belongs to the EPSP synthase family. The protein in the 3rd section; belongs to the shikimate kinase family. In the 4th section; belongs to the type-I 3-dehydroquinase family. This sequence in the C-terminal section; belongs to the shikimate dehydrogenase family. Homodimer. The cofactor is Zn(2+).

Its subcellular location is the cytoplasm. It catalyses the reaction 7-phospho-2-dehydro-3-deoxy-D-arabino-heptonate = 3-dehydroquinate + phosphate. The enzyme catalyses 3-dehydroquinate = 3-dehydroshikimate + H2O. The catalysed reaction is shikimate + NADP(+) = 3-dehydroshikimate + NADPH + H(+). It carries out the reaction shikimate + ATP = 3-phosphoshikimate + ADP + H(+). It catalyses the reaction 3-phosphoshikimate + phosphoenolpyruvate = 5-O-(1-carboxyvinyl)-3-phosphoshikimate + phosphate. It functions in the pathway metabolic intermediate biosynthesis; chorismate biosynthesis; chorismate from D-erythrose 4-phosphate and phosphoenolpyruvate: step 2/7. It participates in metabolic intermediate biosynthesis; chorismate biosynthesis; chorismate from D-erythrose 4-phosphate and phosphoenolpyruvate: step 3/7. Its pathway is metabolic intermediate biosynthesis; chorismate biosynthesis; chorismate from D-erythrose 4-phosphate and phosphoenolpyruvate: step 4/7. The protein operates within metabolic intermediate biosynthesis; chorismate biosynthesis; chorismate from D-erythrose 4-phosphate and phosphoenolpyruvate: step 5/7. It functions in the pathway metabolic intermediate biosynthesis; chorismate biosynthesis; chorismate from D-erythrose 4-phosphate and phosphoenolpyruvate: step 6/7. Its function is as follows. The AROM polypeptide catalyzes 5 consecutive enzymatic reactions in prechorismate polyaromatic amino acid biosynthesis. This chain is Pentafunctional AROM polypeptide, found in Fusarium vanettenii (strain ATCC MYA-4622 / CBS 123669 / FGSC 9596 / NRRL 45880 / 77-13-4) (Fusarium solani subsp. pisi).